Reading from the N-terminus, the 162-residue chain is Ribosome maturation factor RimP (162 aa).

Belongs to the RimP family.

The protein localises to the cytoplasm. In terms of biological role, required for maturation of 30S ribosomal subunits. In Syntrophotalea carbinolica (strain DSM 2380 / NBRC 103641 / GraBd1) (Pelobacter carbinolicus), this protein is Ribosome maturation factor RimP.